The following is a 265-amino-acid chain: Arcelin-2 (265 aa).

The first 21 residues, M1–S21, serve as a signal peptide directing secretion. N33 and N89 each carry an N-linked (GlcNAc...) asparagine glycan. Cysteines 165 and 201 form a disulfide.

It belongs to the leguminous lectin family.

Functionally, seed storage. This carbohydrate-binding lectin has toxic effects on bean bruchid pests. Antibiosis properties of legume lectins are proposed to be due to the lysis of epithelial cells of the intestine by binding to the carbohydrate moieties of these proteins. The polypeptide is Arcelin-2 (ARC2) (Phaseolus vulgaris (Kidney bean)).